A 123-amino-acid chain; its full sequence is Protein Wnt-7a (123 aa).

The O-palmitoleoyl serine; by PORCN moiety is linked to residue S1. The disordered linker stretch occupies residues 33–61 (VEPVRASRNKRPTFLKIKKPLSYLKPMDT). A disulfide bridge connects residues C89 and C104. N-linked (GlcNAc...) asparagine glycosylation occurs at N90.

Belongs to the Wnt family. In terms of processing, palmitoleoylation is required for efficient binding to frizzled receptors. Depalmitoleoylation leads to Wnt signaling pathway inhibition.

It is found in the secreted. The protein localises to the extracellular space. It localises to the extracellular matrix. In terms of biological role, ligand for members of the frizzled family of seven transmembrane receptors that functions in the canonical Wnt/beta-catenin signaling pathway. Plays an important role in embryonic development, including dorsal versus ventral patterning during limb development, skeleton development and urogenital tract development. Required for central nervous system (CNS) angiogenesis and blood-brain barrier regulation. The chain is Protein Wnt-7a (WNT-7A) from Plethodon jordani (Red-cheeked salamander).